We begin with the raw amino-acid sequence, 772 residues long: MKLTLVILALVACVTAFSVPTQKVKIADKNFLEKQKFLFEIVHRIDEPLMFEEWIKMGQKLITDKAQYETFDFYMEKLWESYKLGALLPKGEFFGALVKTHHKQAYGLFNFFYYAKDWETFVRNVAWARIHVNEGMFVYALTLAVIHKPEFEGLILPQIYEIFPQYFFNSKFVYAAEKFDYEVFSKLTMYEKEYKDILYKDYSEFTGNFYFYTKDWKTWQWYKMMGLDQEWYVEDKYFLRENLSQFVNDPKYVDVVKGLKKFYMPVDYTRDIDFFNDETKMTYFTEDLGWNAYWYYLNMDYAFFLNGKQFGLDKDRRGEYWIYNVQQILARYYQERLANGFGEIPEFFWYKQIEYGYDPQLIYYNGIGYSYRKNYYDFYTYGKFEMYSQIQNFFSRVYKVLETGFYKTADGQVFDLHKPEAIKIVGNYLQGNADTFDKYFFNYYYLLAHMYFADVDYNDMEVFPNVFLNFETMLRDPFFYTFYKKFTDVFYTFKYYLKPYTQKDLFYEGITIKDVSVSKLVTYYDIVDFDVTNLLNDKMTFVDGQYIWDKALLARQARLNHKPFNFEFTIDSDKVQKGVVRVFLGPKFDEYGRVIPLDYNRKNFVQIDSFVYPFIAGTNTIKRSSKEFSWTAEDRITYTELYKYVMLASEGKYDFPLDISEPHNAFPDRLVLPKGWEQGMPMQFYFFVSPFAETYEQFSNFDYTYSSGVGSGTRFVDTKPFGYPFDRQIDESDFFVPNGFFKDVKVYYVDTFAKYFEKKYTQFGTFDYSIEY.

A signal peptide spans 1–16 (MKLTLVILALVACVTA). The N-linked (GlcNAc...) asparagine glycan is linked to Asn-242.

Belongs to the hemocyanin family. In terms of assembly, heterohexamer, composed of three subunits, alpha, beta and gamma. As to expression, larval hemolymph.

It localises to the secreted. The protein resides in the extracellular space. Its function is as follows. Larval storage protein (LSP) which may serve as a store of amino acids for synthesis of adult proteins. The protein is Larval serum protein 1 gamma chain (Lsp1gamma) of Drosophila melanogaster (Fruit fly).